Consider the following 512-residue polypeptide: Rab11 family-interacting protein 2 (512 aa).

The C2 domain occupies 1-120 (MMLSEQAQKW…DKQRRKTEWF (120 aa)). Positions 15–102 (VQVTVLQAKD…GLDKFLGQVA (88 aa)) are necessary for its cellular translocation to the plasma membrane. Disordered stretches follow at residues 174–231 (RKSD…MSDL) and 263–287 (PESGSLKSPHRRTLSFDTSKLNQPG). Polar residues-rich tracts occupy residues 221-231 (RLSSAHSMSDL) and 277-287 (SFDTSKLNQPG). Position 227 is a phosphoserine; by MARK2 (Ser227). A Phosphoserine modification is found at Ser277. The NPF 1 signature appears at 323–325 (NPF). Positions 347 to 374 (KESKREKREKVSLFERVTGKRDSRRPDK) are enriched in basic and acidic residues. A disordered region spans residues 347 to 390 (KESKREKREKVSLFERVTGKRDSRRPDKLNNGGSDSPCDLKSPS). 2 consecutive short sequence motifs (NPF) follow at residues 406 to 408 (NPF) and 440 to 442 (NPF). The 63-residue stretch at 437-499 (PDNNPFDATA…EETPSILRVP (63 aa)) folds into the FIP-RBD domain. The tract at residues 465 to 512 (ELLRRKDTHIRELEDYIDNLLVRVMEETPSILRVPYEPSRKAGKFTNS) is necessary for interaction with AP2A1, RAB11A, subcellular location, endocytosis activity and homooligomerization.

Homooligomerizes in a Rab11-independent manner. Forms a heterooligomeric complex with RAB11FIP4. Interacts with AP2A1, MYO5B, RAB25 and REPS1. Interacts with RAB11A and RAB11B (activated GTP-bound form). Interacts with NPC1L1. Interacts (via NPF motifs) with EHD1 and EHD3. Interacts with TICAM2; this interaction directs RAB11FIP2 to the phagosome. Interacts with RAB14 and RAB25 (GTP-bound forms). Phosphorylation at Ser-227 by MARK2 regulates epithelial cell polarity.

It localises to the cell membrane. It is found in the recycling endosome membrane. A Rab11 effector binding preferentially phosphatidylinositol 3,4,5-trisphosphate (PtdInsP3) and phosphatidic acid (PA) and acting in the regulation of the transport of vesicles from the endosomal recycling compartment (ERC) to the plasma membrane. Involved in insulin granule exocytosis. Also involved in receptor-mediated endocytosis and membrane trafficking of recycling endosomes, probably originating from clathrin-coated vesicles. Required in a complex with MYO5B and RAB11 for the transport of NPC1L1 to the plasma membrane. Also acts as a regulator of cell polarity. Plays an essential role in phagocytosis through a mechanism involving TICAM2, RAC1 and CDC42 Rho GTPases for controlling actin-dynamics. This is Rab11 family-interacting protein 2 (Rab11fip2) from Mus musculus (Mouse).